A 496-amino-acid chain; its full sequence is L-arabinose isomerase (496 aa).

Glu-305, Glu-330, His-347, and His-446 together coordinate Mn(2+).

The protein belongs to the arabinose isomerase family. Mn(2+) serves as cofactor.

It carries out the reaction beta-L-arabinopyranose = L-ribulose. It participates in carbohydrate degradation; L-arabinose degradation via L-ribulose; D-xylulose 5-phosphate from L-arabinose (bacterial route): step 1/3. Functionally, catalyzes the conversion of L-arabinose to L-ribulose. This is L-arabinose isomerase from Bacillus subtilis (strain 168).